We begin with the raw amino-acid sequence, 191 residues long: Prophage tail fiber assembly protein homolog TfaR (191 aa).

Belongs to the tfa family.

This chain is Prophage tail fiber assembly protein homolog TfaR (tfaR), found in Escherichia coli (strain K12).